Reading from the N-terminus, the 379-residue chain is Succinyl-diaminopimelate desuccinylase (379 aa).

His-70 lines the Zn(2+) pocket. The active site involves Asp-72. A Zn(2+)-binding site is contributed by Asp-103. Catalysis depends on Glu-137, which acts as the Proton acceptor. Residues Glu-138, Glu-166, and His-352 each contribute to the Zn(2+) site.

The protein belongs to the peptidase M20A family. DapE subfamily. In terms of assembly, homodimer. It depends on Zn(2+) as a cofactor. Requires Co(2+) as cofactor.

It carries out the reaction N-succinyl-(2S,6S)-2,6-diaminopimelate + H2O = (2S,6S)-2,6-diaminopimelate + succinate. It participates in amino-acid biosynthesis; L-lysine biosynthesis via DAP pathway; LL-2,6-diaminopimelate from (S)-tetrahydrodipicolinate (succinylase route): step 3/3. Functionally, catalyzes the hydrolysis of N-succinyl-L,L-diaminopimelic acid (SDAP), forming succinate and LL-2,6-diaminopimelate (DAP), an intermediate involved in the bacterial biosynthesis of lysine and meso-diaminopimelic acid, an essential component of bacterial cell walls. This Burkholderia ambifaria (strain ATCC BAA-244 / DSM 16087 / CCUG 44356 / LMG 19182 / AMMD) (Burkholderia cepacia (strain AMMD)) protein is Succinyl-diaminopimelate desuccinylase.